The primary structure comprises 210 residues: MPPYTIVYFPVRGRCEAMRMLLADQGQSWKEEVVTIDTWMQGLLKPTCLYGQLPKFEDGDLTLYQSNAILRHLGRSLGLYGKNQREAAQMDMVNDGVEDLRGKYVTLIYTNYENGKNDYVKALPGHLKPFETLLSQNQGGKAFIVGDQISFADYNLLDLLLIHQVLAPGCLDNFPLLSAYVARLSARPKIKAFLSSPEHVNRPINGNGKQ.

Residues P2–G81 enclose the GST N-terminal domain. Y4 is subject to Phosphotyrosine; by EGFR. Residues Y8, R14, W39, K45, and Q52–L53 each bind glutathione. Position 62 is a phosphothreonine (T62). Position 65–66 (Q65–S66) interacts with glutathione. The GST C-terminal domain maps to N83–I204. An N6-succinyllysine mark is found at K103 and K116. K128 bears the N6-acetyllysine mark.

Homodimer. Interacts with CDK5. As to expression, ubiquitously expressed.

The protein resides in the cytoplasm. It localises to the mitochondrion. The protein localises to the nucleus. It carries out the reaction RX + glutathione = an S-substituted glutathione + a halide anion + H(+). It catalyses the reaction prostaglandin J2 + glutathione = prostaglandin J2-S-(R)-glutathione. The enzyme catalyses prostaglandin J2 + glutathione = prostaglandin J2-S-(S)-glutathione. The catalysed reaction is prostaglandin A2 + glutathione = prostaglandin A2-S-(S)-glutathione. It carries out the reaction 11(S)-hydroxy-14(S),15(S)-epoxy-(5Z,8Z,12E)-eicosatrienoate + glutathione = (11S,15S)-dihydroxy-14(R)-S-glutathionyl-(5Z,8Z,12E)-eicosatrienoate. Conjugation of reduced glutathione to a wide number of exogenous and endogenous hydrophobic electrophiles. Involved in the formation of glutathione conjugates of both prostaglandin A2 (PGA2) and prostaglandin J2 (PGJ2). Participates in the formation of novel hepoxilin regioisomers. Negatively regulates CDK5 activity via p25/p35 translocation to prevent neurodegeneration. This Mus musculus (Mouse) protein is Glutathione S-transferase P 1.